The following is a 429-amino-acid chain: UDP-N-acetylglucosamine 1-carboxyvinyltransferase (429 aa).

22–23 contributes to the phosphoenolpyruvate binding site; sequence KN. Arginine 102 provides a ligand contact to UDP-N-acetyl-alpha-D-glucosamine. Cysteine 126 (proton donor) is an active-site residue. Position 126 is a 2-(S-cysteinyl)pyruvic acid O-phosphothioketal (cysteine 126). UDP-N-acetyl-alpha-D-glucosamine-binding positions include 131 to 135, aspartate 316, and isoleucine 338; that span reads RPVDL.

Belongs to the EPSP synthase family. MurA subfamily.

Its subcellular location is the cytoplasm. The enzyme catalyses phosphoenolpyruvate + UDP-N-acetyl-alpha-D-glucosamine = UDP-N-acetyl-3-O-(1-carboxyvinyl)-alpha-D-glucosamine + phosphate. Its pathway is cell wall biogenesis; peptidoglycan biosynthesis. In terms of biological role, cell wall formation. Adds enolpyruvyl to UDP-N-acetylglucosamine. The polypeptide is UDP-N-acetylglucosamine 1-carboxyvinyltransferase (Rhodopseudomonas palustris (strain BisB18)).